A 624-amino-acid chain; its full sequence is Chromosomal replication initiator protein DnaA (624 aa).

The tract at residues 1–99 (MADVPADLAA…SAGEPPSPPA (99 aa)) is domain I, interacts with DnaA modulators. The tract at residues 88 to 284 (DDSAGEPPSP…APGPGEPHAR (197 aa)) is disordered. A domain II region spans residues 100-283 (PPMHQSHQSQ…PAPGPGEPHA (184 aa)). The span at 102–112 (MHQSHQSQQGH) shows a compositional bias: low complexity. 2 stretches are compositionally biased toward basic and acidic residues: residues 118 to 141 (QRDDAPRGDAYDGYGHRPSDDGMP) and 176 to 206 (GYQDREQPSGEPYRESESYRERENEQYREQA). Positions 250 to 264 (PRQGGHGPGRTGGSV) are enriched in gly residues. Positions 284-500 (RLNPKYLFDT…GALIRVTAFA (217 aa)) are domain III, AAA+ region. G328, G330, K331, and T332 together coordinate ATP. The tract at residues 501-624 (SLNRQPVDLG…TELTNRIKNG (124 aa)) is domain IV, binds dsDNA.

Belongs to the DnaA family. In terms of assembly, oligomerizes as a right-handed, spiral filament on DNA at oriC.

The protein localises to the cytoplasm. Plays an essential role in the initiation and regulation of chromosomal replication. ATP-DnaA binds to the origin of replication (oriC) to initiate formation of the DNA replication initiation complex once per cell cycle. Binds the DnaA box (a 9 base pair repeat at the origin) and separates the double-stranded (ds)DNA. Forms a right-handed helical filament on oriC DNA; dsDNA binds to the exterior of the filament while single-stranded (ss)DNA is stabiized in the filament's interior. The ATP-DnaA-oriC complex binds and stabilizes one strand of the AT-rich DNA unwinding element (DUE), permitting loading of DNA polymerase. After initiation quickly degrades to an ADP-DnaA complex that is not apt for DNA replication. Binds acidic phospholipids. Its function is as follows. The DnaA box consensus is 5'-(T/C)(T/C)(G/AC)TCCACA-3'. The sequence is that of Chromosomal replication initiator protein DnaA from Streptomyces anulatus (Streptomyces chrysomallus).